Reading from the N-terminus, the 338-residue chain is Glyceraldehyde-3-phosphate dehydrogenase (338 aa).

NAD(+) is bound by residues 13–14, Asp-35, and Arg-80; that span reads RI. Residues 151–153, Thr-182, 211–212, and Arg-234 contribute to the D-glyceraldehyde 3-phosphate site; these read SCT and TG. Cys-152 acts as the Nucleophile in catalysis. An NAD(+)-binding site is contributed by Asn-317.

This sequence belongs to the glyceraldehyde-3-phosphate dehydrogenase family. Homotetramer.

Its subcellular location is the cytoplasm. It carries out the reaction D-glyceraldehyde 3-phosphate + phosphate + NAD(+) = (2R)-3-phospho-glyceroyl phosphate + NADH + H(+). It participates in carbohydrate degradation; glycolysis; pyruvate from D-glyceraldehyde 3-phosphate: step 1/5. The sequence is that of Glyceraldehyde-3-phosphate dehydrogenase (gpdA) from Aspergillus oryzae (strain ATCC 42149 / RIB 40) (Yellow koji mold).